Reading from the N-terminus, the 41-residue chain is PCFCGKTVGIYWFALYSCPGGYGYTGHCGHFMGVCCYPANP.

3 disulfides stabilise this stretch: Cys-2–Cys-35, Cys-4–Cys-28, and Cys-18–Cys-36.

This sequence belongs to the sea anemone type 3 (BDS) potassium channel toxin family.

It is found in the secreted. It localises to the nematocyst. Functionally, potently and selectively inhibits voltage-gated potassium channels Kv11/KCNH/ERG. Acts as a gating-modifier toxin that shifts the voltage-dependence of ERG activation in the positive direction and suppresses its current amplitudes elicited by strong depolarizing pulses that maximally activate the channels. The polypeptide is U-AITX-Bg1a (Bunodosoma granuliferum (Red warty sea anemone)).